A 181-amino-acid polypeptide reads, in one-letter code: Biofilm-surface layer protein A (181 aa).

Positions 1–28 (MKRKLLSSLAISALSLGLLVSAPTASFA) are cleaved as a signal peptide.

It belongs to the BslA/BslB family. As to quaternary structure, forms polymers.

Its subcellular location is the secreted. The protein resides in the cell wall. Functionally, involved in biofilm formation. Self-polymerizes and forms a layer on the surface of biofilms that confers hydrophobicity to the biofilm. The layer is stable and capable of resistance to high mechanical force compression. Required for complex colony architecture. May function synergistically with exopolysaccharides and TasA amyloid fibers to facilitate the assembly of the biofilm matrix. The protein is Biofilm-surface layer protein A of Bacillus subtilis (strain 168).